The sequence spans 416 residues: Adenylosuccinate synthetase (416 aa).

Residues 13–19 and 41–43 each bind GTP; these read GDEGKGK and GHT. Asp14 functions as the Proton acceptor in the catalytic mechanism. Mg(2+) is bound by residues Asp14 and Gly41. Residues 14-17, 39-42, Thr126, Arg140, Gln220, Thr235, and Arg299 contribute to the IMP site; these read DEGK and NAGH. Catalysis depends on His42, which acts as the Proton donor. 295-301 is a substrate binding site; that stretch reads VSTGRKR. GTP is bound by residues Arg301, 327 to 329, and 405 to 407; these read KLD and STS.

Belongs to the adenylosuccinate synthetase family. As to quaternary structure, homodimer. The cofactor is Mg(2+).

It is found in the cytoplasm. The catalysed reaction is IMP + L-aspartate + GTP = N(6)-(1,2-dicarboxyethyl)-AMP + GDP + phosphate + 2 H(+). Its pathway is purine metabolism; AMP biosynthesis via de novo pathway; AMP from IMP: step 1/2. Functionally, plays an important role in the de novo pathway of purine nucleotide biosynthesis. Catalyzes the first committed step in the biosynthesis of AMP from IMP. The sequence is that of Adenylosuccinate synthetase from Campylobacter lari (strain RM2100 / D67 / ATCC BAA-1060).